The sequence spans 237 residues: Protein GrpE (237 aa).

Disordered stretches follow at residues 1 to 52 and 200 to 237; these read MSGD…RLQQ and KVSM…QPGV. Residues 27–40 show a composition bias toward polar residues; it reads ASINSDEGQSSAQS. Over residues 204–218 the composition is skewed to low complexity; sequence GPGPQSGASPSSAQP.

The protein belongs to the GrpE family. As to quaternary structure, homodimer.

It is found in the cytoplasm. Functionally, participates actively in the response to hyperosmotic and heat shock by preventing the aggregation of stress-denatured proteins, in association with DnaK and GrpE. It is the nucleotide exchange factor for DnaK and may function as a thermosensor. Unfolded proteins bind initially to DnaJ; upon interaction with the DnaJ-bound protein, DnaK hydrolyzes its bound ATP, resulting in the formation of a stable complex. GrpE releases ADP from DnaK; ATP binding to DnaK triggers the release of the substrate protein, thus completing the reaction cycle. Several rounds of ATP-dependent interactions between DnaJ, DnaK and GrpE are required for fully efficient folding. The chain is Protein GrpE from Prochlorococcus marinus (strain MIT 9313).